A 624-amino-acid polypeptide reads, in one-letter code: Chaperone protein HtpG (624 aa).

Positions 1 to 336 (MKGQETRGFQ…SSDLPLNVSR (336 aa)) are a; substrate-binding. The tract at residues 337 to 552 (EILQDSTVTR…ADEMSTQMAK (216 aa)) is b. The segment at 553 to 624 (LFAAAGQKVP…IRRMNQLLVS (72 aa)) is c.

This sequence belongs to the heat shock protein 90 family. As to quaternary structure, homodimer.

Its subcellular location is the cytoplasm. Molecular chaperone. Has ATPase activity. This chain is Chaperone protein HtpG, found in Escherichia coli O1:K1 / APEC.